The following is a 308-amino-acid chain: HTH-type transcriptional regulator YtlI (308 aa).

Residues 1-57 (MELRSIKTFHTIVKFGSFYKAAEILNYSQPTISMRMKQLEQDLGVLLFERGKSLQLT) enclose the HTH lysR-type domain. A DNA-binding region (H-T-H motif) is located at residues 18 to 37 (FYKAAEILNYSQPTISMRMK).

It belongs to the LysR transcriptional regulatory family.

Positively regulates the expression of ytmI operon in response to the availability of sulfur sources. This is HTH-type transcriptional regulator YtlI (ytlI) from Bacillus subtilis (strain 168).